Reading from the N-terminus, the 185-residue chain is Ribosome-recycling factor (185 aa).

It belongs to the RRF family.

The protein localises to the cytoplasm. In terms of biological role, responsible for the release of ribosomes from messenger RNA at the termination of protein biosynthesis. May increase the efficiency of translation by recycling ribosomes from one round of translation to another. The sequence is that of Ribosome-recycling factor from Listeria monocytogenes serovar 1/2a (strain ATCC BAA-679 / EGD-e).